The sequence spans 175 residues: Lipopolysaccharide export system protein LptH (175 aa).

The signal sequence occupies residues 1–24 (MRFVNTLPLIFGLTAALGSSMALA).

The protein belongs to the LptA family. Component of the lipopolysaccharide transport and assembly complex. Mainly exists as a dimer in solution. Tends to oligomerize already in solution. The protomers follow one another in a head-to-tail fashion throughout the crystal lattice, yielding a continuous fiber arrangement.

It localises to the periplasm. In terms of biological role, involved in the assembly of lipopolysaccharide (LPS). Required for the translocation of LPS from the inner membrane to the outer membrane. May form a bridge between the inner membrane and the outer membrane, via interactions with LptC and LptD, thereby facilitating LPS transfer across the periplasm. Binds LPS. Important for cell envelope stability and essential for growth, cell viability and ability to cause infection in different animal models. In Pseudomonas aeruginosa (strain ATCC 15692 / DSM 22644 / CIP 104116 / JCM 14847 / LMG 12228 / 1C / PRS 101 / PAO1), this protein is Lipopolysaccharide export system protein LptH.